We begin with the raw amino-acid sequence, 384 residues long: 1-deoxy-D-xylulose 5-phosphate reductoisomerase (384 aa).

Residues threonine 10, glycine 11, serine 12, isoleucine 13, glycine 36, and asparagine 122 each coordinate NADPH. Residue lysine 123 participates in 1-deoxy-D-xylulose 5-phosphate binding. Glutamate 124 contacts NADPH. Aspartate 148 provides a ligand contact to Mn(2+). Serine 149, glutamate 150, serine 174, and histidine 197 together coordinate 1-deoxy-D-xylulose 5-phosphate. Glutamate 150 is a Mn(2+) binding site. Glycine 203 provides a ligand contact to NADPH. 1-deoxy-D-xylulose 5-phosphate is bound by residues serine 210, asparagine 215, lysine 216, and glutamate 219. Mn(2+) is bound at residue glutamate 219.

This sequence belongs to the DXR family. Mg(2+) serves as cofactor. It depends on Mn(2+) as a cofactor.

The enzyme catalyses 2-C-methyl-D-erythritol 4-phosphate + NADP(+) = 1-deoxy-D-xylulose 5-phosphate + NADPH + H(+). It functions in the pathway isoprenoid biosynthesis; isopentenyl diphosphate biosynthesis via DXP pathway; isopentenyl diphosphate from 1-deoxy-D-xylulose 5-phosphate: step 1/6. Its function is as follows. Catalyzes the NADPH-dependent rearrangement and reduction of 1-deoxy-D-xylulose-5-phosphate (DXP) to 2-C-methyl-D-erythritol 4-phosphate (MEP). The sequence is that of 1-deoxy-D-xylulose 5-phosphate reductoisomerase from Chlorobium phaeobacteroides (strain DSM 266 / SMG 266 / 2430).